An 80-amino-acid polypeptide reads, in one-letter code: Small ribosomal subunit protein bS18 (80 aa).

Belongs to the bacterial ribosomal protein bS18 family. In terms of assembly, part of the 30S ribosomal subunit. Forms a tight heterodimer with protein bS6.

In terms of biological role, binds as a heterodimer with protein bS6 to the central domain of the 16S rRNA, where it helps stabilize the platform of the 30S subunit. This Clostridium botulinum (strain 657 / Type Ba4) protein is Small ribosomal subunit protein bS18.